The chain runs to 89 residues: Small ribosomal subunit protein uS15 (89 aa).

The protein belongs to the universal ribosomal protein uS15 family. As to quaternary structure, part of the 30S ribosomal subunit. Forms a bridge to the 50S subunit in the 70S ribosome, contacting the 23S rRNA.

In terms of biological role, one of the primary rRNA binding proteins, it binds directly to 16S rRNA where it helps nucleate assembly of the platform of the 30S subunit by binding and bridging several RNA helices of the 16S rRNA. Functionally, forms an intersubunit bridge (bridge B4) with the 23S rRNA of the 50S subunit in the ribosome. This Shewanella loihica (strain ATCC BAA-1088 / PV-4) protein is Small ribosomal subunit protein uS15.